A 228-amino-acid chain; its full sequence is Prolactin-2A1 (228 aa).

The first 29 residues, 1–29 (MQLSITHPCCWTLRLLLVSNLLLWENVAL), serve as a signal peptide directing secretion. Intrachain disulfides connect Cys-87–Cys-203 and Cys-220–Cys-228.

It belongs to the somatotropin/prolactin family. In terms of tissue distribution, expressed specifically in the placenta. Highly expressed in invasive trophoblast cells lining the central placental vessel.

The protein resides in the secreted. The protein is Prolactin-2A1 (Prl2a1) of Rattus norvegicus (Rat).